A 623-amino-acid chain; its full sequence is MEAEETMECLQEFPEHHKMILDRLNEQREQDRFTDITLIVDGHHFKAHKAVLAACSKFFYKFFQEFTQEPLVEIEGVSKMAFRHLIEFTYTAKLMIQGEEEANDVWKAAEFLQMLEAIKALEVRNKENSAPLEENTTGKNEAKKRKIAETSNVITESLPSAESEPVEIEVEIAEGTIEVEDEGIETLEEVASAKQSVKYIQSTGSSDDSALALLADITSKYRQGDRKGQIKEDGCPSDPTSKQVEGIEIVELQLSHVKDLFHCEKCNRSFKLFYHFKEHMKSHSTESFKCEICNKRYLRESAWKQHLNCYHLEEGGVSKKQRTGKKIHVCQYCEKQFDHFGHFKEHLRKHTGEKPFECPNCHERFARNSTLKCHLTACQTGVGAKKGRKKLYECQVCNSVFNSWDQFKDHLVIHTGDKPNHCTLCDLWFMQGNELRRHLSDAHNISERLVTEEVLSVETRVQTEPVTSMTIIEQVGKVHVLPLLQVQVDSAQVTVEQVHPDLLQDSQVHDSHMSELPEQVQVSYLEVGRIQTEEGTEVHVEELHVERVNQMPVEVQTELLEADLDHVTPEIMNQEERESSQADAAEAAREDHEDAEDLETKPTVDSEAEKAENEDRTALPVLE.

In terms of domain architecture, BTB spans 34 to 98 (TDITLIVDGH…TYTAKLMIQG (65 aa)). Residues 137-148 (TGKNEAKKRKIA) carry the Nuclear localization signal 1 motif. 3 consecutive C2H2-type zinc fingers follow at residues 261–283 (FHCEKCNRSFKLFYHFKEHMKSH), 288–311 (FKCEICNKRYLRESAWKQHLNCYH), and 328–350 (HVCQYCEKQFDHFGHFKEHLRKH). Glycyl lysine isopeptide (Lys-Gly) (interchain with G-Cter in SUMO2) cross-links involve residues Lys-289 and Lys-295. Residues 317 to 328 (VSKKQRTGKKIH) carry the Nuclear localization signal 2 motif. A C2H2-type 4; degenerate zinc finger spans residues 356–381 (FECPNCHERFARNSTLKCHLTACQTG). 2 consecutive C2H2-type zinc fingers follow at residues 392-414 (YECQVCNSVFNSWDQFKDHLVIH) and 420-443 (NHCTLCDLWFMQGNELRRHLSDAH). The segment covering 573–617 (NQEERESSQADAAEAAREDHEDAEDLETKPTVDSEAEKAENEDRT) has biased composition (basic and acidic residues). The interval 573–623 (NQEERESSQADAAEAAREDHEDAEDLETKPTVDSEAEKAENEDRTALPVLE) is disordered. Lys-601 is covalently cross-linked (Glycyl lysine isopeptide (Lys-Gly) (interchain with G-Cter in SUMO)).

It belongs to the krueppel C2H2-type zinc-finger protein family. Monosumoylated at Lys-601 by CBX4 and UHRF2. Sumoylation may potentiate ZNF131 inhibition of estrogen signaling. Sumoylation does not interfere with ubiquitination. In terms of processing, ubiquitinated. As to expression, predominant expression is found in different brain areas such as the occipital and temporal lobe, the nucleus caudatus, hippocampus, and the cerebellum as well as in testis and thymus.

It localises to the nucleus. Plays a role during development and organogenesis as well as in the function of the adult central nervous system. May be involved in transcriptional regulation as a repressor of ESR1/ER-alpha signaling. This Homo sapiens (Human) protein is Zinc finger protein 131 (ZNF131).